The following is a 503-amino-acid chain: Na(+)-translocating NADH-quinone reductase subunit B (503 aa).

A run of 3 helical transmembrane segments spans residues 55–75 (MMLV…NSGL), 120–142 (IFLP…FAII), and 160–180 (LILP…FGVV). Thr-248 is subject to FMN phosphoryl threonine. The next 5 membrane-spanning stretches (helical) occupy residues 361–381 (TSTV…IASW), 384–404 (MLSF…MSIL), 417–437 (FFIP…LVFM), 452–472 (WLYG…NPAY), and 475–495 (GVML…NIAL).

The protein belongs to the NqrB/RnfD family. In terms of assembly, composed of six subunits; NqrA, NqrB, NqrC, NqrD, NqrE and NqrF. Requires FMN as cofactor.

It localises to the cell inner membrane. The enzyme catalyses a ubiquinone + n Na(+)(in) + NADH + H(+) = a ubiquinol + n Na(+)(out) + NAD(+). Functionally, NQR complex catalyzes the reduction of ubiquinone-1 to ubiquinol by two successive reactions, coupled with the transport of Na(+) ions from the cytoplasm to the periplasm. NqrA to NqrE are probably involved in the second step, the conversion of ubisemiquinone to ubiquinol. In Chlamydia trachomatis serovar A (strain ATCC VR-571B / DSM 19440 / HAR-13), this protein is Na(+)-translocating NADH-quinone reductase subunit B.